The chain runs to 339 residues: Cobalt-precorrin-5B C(1)-methyltransferase (339 aa).

This sequence belongs to the CbiD family.

It carries out the reaction Co-precorrin-5B + S-adenosyl-L-methionine = Co-precorrin-6A + S-adenosyl-L-homocysteine. It participates in cofactor biosynthesis; adenosylcobalamin biosynthesis; cob(II)yrinate a,c-diamide from sirohydrochlorin (anaerobic route): step 6/10. Functionally, catalyzes the methylation of C-1 in cobalt-precorrin-5B to form cobalt-precorrin-6A. This is Cobalt-precorrin-5B C(1)-methyltransferase from Methanosarcina acetivorans (strain ATCC 35395 / DSM 2834 / JCM 12185 / C2A).